Here is an 848-residue protein sequence, read N- to C-terminus: DNA-binding protein RFX6 (848 aa).

Residues 56–131 (TLQWLEDNYI…YHYYGIGIKE (76 aa)) constitute a DNA-binding region (RFX-type winged-helix).

It belongs to the RFX family. Expressed in progenitors and hormone expressing cells of the islet lineage.

It is found in the nucleus. Transcription factor required to direct islet cell differentiation during endocrine pancreas development. This chain is DNA-binding protein RFX6 (rfx6), found in Danio rerio (Zebrafish).